We begin with the raw amino-acid sequence, 292 residues long: 4-diphosphocytidyl-2-C-methyl-D-erythritol kinase (292 aa).

K10 is an active-site residue. ATP is bound at residue 100–110; it reads PIGSGLGGGSS. D142 is an active-site residue.

It belongs to the GHMP kinase family. IspE subfamily. Homodimer.

It carries out the reaction 4-CDP-2-C-methyl-D-erythritol + ATP = 4-CDP-2-C-methyl-D-erythritol 2-phosphate + ADP + H(+). Its pathway is isoprenoid biosynthesis; isopentenyl diphosphate biosynthesis via DXP pathway; isopentenyl diphosphate from 1-deoxy-D-xylulose 5-phosphate: step 3/6. In terms of biological role, catalyzes the phosphorylation of the position 2 hydroxy group of 4-diphosphocytidyl-2C-methyl-D-erythritol. The protein is 4-diphosphocytidyl-2-C-methyl-D-erythritol kinase of Buchnera aphidicola subsp. Schizaphis graminum (strain Sg).